A 1419-amino-acid polypeptide reads, in one-letter code: L-2-aminoadipate reductase (1419 aa).

Residues 880-956 (ETLTATERDI…GLAKEIERMK (77 aa)) form the Carrier domain. Ser916 carries the O-(pantetheine 4'-phosphoryl)serine modification.

This sequence belongs to the ATP-dependent AMP-binding enzyme family. Pantetheine 4'-phosphate serves as cofactor.

The protein localises to the cytoplasm. The enzyme catalyses (S)-2-amino-6-oxohexanoate + NADP(+) + H2O = L-2-aminoadipate + NADPH + 2 H(+). It carries out the reaction (S)-2-amino-6-oxohexanoate + NAD(+) + H2O = L-2-aminoadipate + NADH + 2 H(+). The catalysed reaction is (S)-2-amino-6-oxohexanoate + AMP + diphosphate + NADP(+) = L-2-aminoadipate + ATP + NADPH + H(+). It functions in the pathway amino-acid biosynthesis; L-lysine biosynthesis via AAA pathway; L-lysine from L-alpha-aminoadipate (fungal route): step 1/3. In terms of biological role, catalyzes the activation of alpha-aminoadipate by ATP-dependent adenylation and the reduction of activated alpha-aminoadipate by NADPH. The activated alpha-aminoadipate is bound to the phosphopantheinyl group of the enzyme itself before it is reduced to (S)-2-amino-6-oxohexanoate. This is L-2-aminoadipate reductase (lys1) from Schizosaccharomyces pombe (strain 972 / ATCC 24843) (Fission yeast).